A 312-amino-acid chain; its full sequence is tRNA pseudouridine synthase B (312 aa).

Catalysis depends on D47, which acts as the Nucleophile.

Belongs to the pseudouridine synthase TruB family. Type 1 subfamily.

It carries out the reaction uridine(55) in tRNA = pseudouridine(55) in tRNA. In terms of biological role, responsible for synthesis of pseudouridine from uracil-55 in the psi GC loop of transfer RNAs. This is tRNA pseudouridine synthase B from Vibrio cholerae serotype O1 (strain M66-2).